We begin with the raw amino-acid sequence, 474 residues long: Zinc finger protein 230 (474 aa).

The region spanning Val-8 to Ser-76 is the KRAB domain. Residues Thr-80–Ser-167 form a KRNB region. C2H2-type zinc fingers lie at residues His-168–His-190, Ser-196–His-218, Phe-224–His-246, Tyr-252–His-274, Phe-280–His-302, Tyr-308–His-330, Tyr-336–His-358, Tyr-364–His-386, and Tyr-392–His-414. A C2H2-type 10; atypical zinc finger spans residues Phe-420–His-442.

Belongs to the krueppel C2H2-type zinc-finger protein family.

The protein resides in the nucleus. Functionally, may be involved in transcriptional regulation. This chain is Zinc finger protein 230 (ZNF230), found in Homo sapiens (Human).